The chain runs to 136 residues: Putative pre-16S rRNA nuclease (136 aa).

It belongs to the YqgF nuclease family.

It is found in the cytoplasm. Its function is as follows. Could be a nuclease involved in processing of the 5'-end of pre-16S rRNA. The sequence is that of Putative pre-16S rRNA nuclease from Francisella philomiragia subsp. philomiragia (strain ATCC 25017 / CCUG 19701 / FSC 153 / O#319-036).